A 444-amino-acid chain; its full sequence is Trigger factor (444 aa).

The PPIase FKBP-type domain occupies 160-245 (DMQVTFDFEG…VKQVEKPKLP (86 aa)).

This sequence belongs to the FKBP-type PPIase family. Tig subfamily.

It localises to the cytoplasm. It catalyses the reaction [protein]-peptidylproline (omega=180) = [protein]-peptidylproline (omega=0). In terms of biological role, involved in protein export. Acts as a chaperone by maintaining the newly synthesized protein in an open conformation. Functions as a peptidyl-prolyl cis-trans isomerase. The sequence is that of Trigger factor from Acinetobacter baumannii (strain SDF).